Consider the following 84-residue polypeptide: Large ribosomal subunit protein bL27 (84 aa).

The interval 1–21 (MAHKKGASSTRNGRDSNAQRL) is disordered. Over residues 7 to 19 (ASSTRNGRDSNAQ) the composition is skewed to polar residues.

Belongs to the bacterial ribosomal protein bL27 family.

The sequence is that of Large ribosomal subunit protein bL27 from Clavibacter michiganensis subsp. michiganensis (strain NCPPB 382).